A 156-amino-acid polypeptide reads, in one-letter code: ATP synthase subunit b (156 aa).

A helical membrane pass occupies residues 7–27 (FFAQMVVFFILWWVVAKFIWP).

It belongs to the ATPase B chain family. F-type ATPases have 2 components, F(1) - the catalytic core - and F(0) - the membrane proton channel. F(1) has five subunits: alpha(3), beta(3), gamma(1), delta(1), epsilon(1). F(0) has three main subunits: a(1), b(2) and c(10-14). The alpha and beta chains form an alternating ring which encloses part of the gamma chain. F(1) is attached to F(0) by a central stalk formed by the gamma and epsilon chains, while a peripheral stalk is formed by the delta and b chains.

It is found in the cell inner membrane. Its function is as follows. F(1)F(0) ATP synthase produces ATP from ADP in the presence of a proton or sodium gradient. F-type ATPases consist of two structural domains, F(1) containing the extramembraneous catalytic core and F(0) containing the membrane proton channel, linked together by a central stalk and a peripheral stalk. During catalysis, ATP synthesis in the catalytic domain of F(1) is coupled via a rotary mechanism of the central stalk subunits to proton translocation. Functionally, component of the F(0) channel, it forms part of the peripheral stalk, linking F(1) to F(0). The polypeptide is ATP synthase subunit b (Cupriavidus necator (strain ATCC 17699 / DSM 428 / KCTC 22496 / NCIMB 10442 / H16 / Stanier 337) (Ralstonia eutropha)).